Consider the following 517-residue polypeptide: MLRAAARFGPRLGRRLLSAAATQAVPAPNQQPEVFCNQIFINNEWHDAVSRKTFPTVNPSTGEVICQVAEGDKEDVDKAVKAARAAFQLGSPWRRMDASHRGRLLNRLADLIERDRTYLAALETLDNGKPYVISYLVDLDMVLKCLRYYAGWADKYHGKTIPIDGDFFSYTRHEPVGVCGQIIPWNFPLLMQAWKLGPALATGNVVVMKVAEQTPLTALYVANLIKEAGFPPGVVNIVPGFGPTAGAAIASHEDVDKVAFTGSTEIGRVIQVAAGSSNLKRVTLELGGKSPNIIMSDADMDWAVEQAHFALFFNQGQCCCAGSRTFVQEDIYDEFVERSVARAKSRVVGNPFDSKTEQGPQVDETQFKKILGYINTGKQEGAKLLCGGGIAADRGYFIQPTVFGDVQDGMTIAKEEIFGPVMQILKFKTIEEVVGRANNSTYGLAAAVFTKDLDKANYLSQALQAGTVWVNCYDVFGAQSPFGGYKMSGSGRELGEYGLQAYTEVKTVTVKVPQKNS.

A mitochondrion-targeting transit peptide spans 1-17 (MLRAAARFGPRLGRRLL). The SIFI-degron motif lies at 9-24 (GPRLGRRLLSAAATQA). N6-acetyllysine is present on residues Lys-52, Lys-73, Lys-78, and Lys-159. NAD(+) is bound at residue 262-267 (GSTEIG). Glu-285 acts as the Proton acceptor in catalysis. Residue Cys-319 is the Nucleophile of the active site. Residues Lys-368, Lys-383, Lys-426, Lys-428, and Lys-451 each carry the N6-acetyllysine modification.

The protein belongs to the aldehyde dehydrogenase family. Homotetramer. Post-translationally, in response to mitochondrial stress, the precursor protein is ubiquitinated by the SIFI complex in the cytoplasm before mitochondrial import, leading to its degradation. Within the SIFI complex, UBR4 initiates ubiquitin chain that are further elongated or branched by KCMF1.

It localises to the mitochondrion matrix. It catalyses the reaction an aldehyde + NAD(+) + H2O = a carboxylate + NADH + 2 H(+). It functions in the pathway alcohol metabolism; ethanol degradation; acetate from ethanol: step 2/2. Its function is as follows. Required for clearance of cellular formaldehyde, a cytotoxic and carcinogenic metabolite that induces DNA damage. The chain is Aldehyde dehydrogenase, mitochondrial (ALDH2) from Homo sapiens (Human).